The primary structure comprises 442 residues: Elongation factor 1-alpha (442 aa).

One can recognise a tr-type G domain in the interval 6 to 229 (KPHMNLIVIG…ALDNLKPPSV (224 aa)). The interval 15 to 22 (GHVDHGKS) is G1. Residue 15 to 22 (GHVDHGKS) coordinates GTP. A Mg(2+)-binding site is contributed by S22. A G2 region spans residues 71-75 (GVTID). Positions 92–95 (DAPG) are G3. GTP-binding positions include 92-96 (DAPGH) and 154-157 (NKMD). Residues 154-157 (NKMD) form a G4 region. The segment at 195–197 (SAW) is G5.

It belongs to the TRAFAC class translation factor GTPase superfamily. Classic translation factor GTPase family. EF-Tu/EF-1A subfamily.

Its subcellular location is the cytoplasm. It carries out the reaction GTP + H2O = GDP + phosphate + H(+). In terms of biological role, GTP hydrolase that promotes the GTP-dependent binding of aminoacyl-tRNA to the A-site of ribosomes during protein biosynthesis. In Ignicoccus hospitalis (strain KIN4/I / DSM 18386 / JCM 14125), this protein is Elongation factor 1-alpha.